Reading from the N-terminus, the 106-residue chain is Iron-sulfur cluster assembly protein CyaY (106 aa).

It belongs to the frataxin family.

In terms of biological role, involved in iron-sulfur (Fe-S) cluster assembly. May act as a regulator of Fe-S biogenesis. The sequence is that of Iron-sulfur cluster assembly protein CyaY from Salmonella schwarzengrund (strain CVM19633).